The sequence spans 201 residues: MLLPWLNEELIEAGCDEAGRGCLAGAVYAAAVILPKDFENELLNDSKQLSEKQRYALREVIERDAVAWAVGIVSPEEIDKINILNASFLAMHRAVDRLKTRPQHLLIDGNRFKKYPDIPHTTVIKGDGKYLSIAAASILAKTYRDDYMNKLHQEFPCYDWEHNKGYPTKKHRAAIAGHGTTPYHRMTFNLLGDGQLELFSK.

The RNase H type-2 domain maps to 10 to 200; the sequence is LIEAGCDEAG…LGDGQLELFS (191 aa). 3 residues coordinate a divalent metal cation: Asp-16, Glu-17, and Asp-108.

Belongs to the RNase HII family. Requires Mn(2+) as cofactor. The cofactor is Mg(2+).

The protein localises to the cytoplasm. The enzyme catalyses Endonucleolytic cleavage to 5'-phosphomonoester.. Functionally, endonuclease that specifically degrades the RNA of RNA-DNA hybrids. This is Ribonuclease HII from Bacteroides fragilis (strain ATCC 25285 / DSM 2151 / CCUG 4856 / JCM 11019 / LMG 10263 / NCTC 9343 / Onslow / VPI 2553 / EN-2).